The primary structure comprises 445 residues: Exodeoxyribonuclease 7 large subunit (445 aa).

The protein belongs to the XseA family. Heterooligomer composed of large and small subunits.

Its subcellular location is the cytoplasm. It carries out the reaction Exonucleolytic cleavage in either 5'- to 3'- or 3'- to 5'-direction to yield nucleoside 5'-phosphates.. Functionally, bidirectionally degrades single-stranded DNA into large acid-insoluble oligonucleotides, which are then degraded further into small acid-soluble oligonucleotides. This Staphylococcus aureus (strain USA300 / TCH1516) protein is Exodeoxyribonuclease 7 large subunit.